The following is a 323-amino-acid chain: tRNA U34 carboxymethyltransferase (323 aa).

Carboxy-S-adenosyl-L-methionine is bound by residues Lys-91, Trp-105, Lys-110, Gly-130, Ile-181 to Glu-182, Met-196, Tyr-200, and Arg-315.

The protein belongs to the class I-like SAM-binding methyltransferase superfamily. CmoB family. In terms of assembly, homotetramer.

It catalyses the reaction carboxy-S-adenosyl-L-methionine + 5-hydroxyuridine(34) in tRNA = 5-carboxymethoxyuridine(34) in tRNA + S-adenosyl-L-homocysteine + H(+). In terms of biological role, catalyzes carboxymethyl transfer from carboxy-S-adenosyl-L-methionine (Cx-SAM) to 5-hydroxyuridine (ho5U) to form 5-carboxymethoxyuridine (cmo5U) at position 34 in tRNAs. In Yersinia pseudotuberculosis serotype O:1b (strain IP 31758), this protein is tRNA U34 carboxymethyltransferase.